Consider the following 486-residue polypeptide: Glycogen synthase 2 (486 aa).

Lys-15 contacts ADP-alpha-D-glucose.

It belongs to the glycosyltransferase 1 family. Bacterial/plant glycogen synthase subfamily.

It catalyses the reaction [(1-&gt;4)-alpha-D-glucosyl](n) + ADP-alpha-D-glucose = [(1-&gt;4)-alpha-D-glucosyl](n+1) + ADP + H(+). It participates in glycan biosynthesis; glycogen biosynthesis. Functionally, synthesizes alpha-1,4-glucan chains using ADP-glucose. The protein is Glycogen synthase 2 (glgA2) of Rhizobium meliloti (strain 1021) (Ensifer meliloti).